A 172-amino-acid polypeptide reads, in one-letter code: Large ribosomal subunit protein uL10 (172 aa).

The protein belongs to the universal ribosomal protein uL10 family. As to quaternary structure, part of the ribosomal stalk of the 50S ribosomal subunit. The N-terminus interacts with L11 and the large rRNA to form the base of the stalk. The C-terminus forms an elongated spine to which L12 dimers bind in a sequential fashion forming a multimeric L10(L12)X complex.

Its function is as follows. Forms part of the ribosomal stalk, playing a central role in the interaction of the ribosome with GTP-bound translation factors. This chain is Large ribosomal subunit protein uL10, found in Prosthecochloris aestuarii (strain DSM 271 / SK 413).